A 197-amino-acid polypeptide reads, in one-letter code: UPF0215 protein MK0057 (197 aa).

It belongs to the UPF0215 family.

The chain is UPF0215 protein MK0057 from Methanopyrus kandleri (strain AV19 / DSM 6324 / JCM 9639 / NBRC 100938).